We begin with the raw amino-acid sequence, 101 residues long: NADH-quinone oxidoreductase subunit K (101 aa).

A run of 3 helical transmembrane segments spans residues 4–24 (LAHF…GIFL), 30–50 (IVLL…FVAF), and 61–81 (VFVF…LAIL).

Belongs to the complex I subunit 4L family. NDH-1 is composed of 14 different subunits. Subunits NuoA, H, J, K, L, M, N constitute the membrane sector of the complex.

It is found in the cell inner membrane. It carries out the reaction a quinone + NADH + 5 H(+)(in) = a quinol + NAD(+) + 4 H(+)(out). NDH-1 shuttles electrons from NADH, via FMN and iron-sulfur (Fe-S) centers, to quinones in the respiratory chain. The immediate electron acceptor for the enzyme in this species is believed to be ubiquinone. Couples the redox reaction to proton translocation (for every two electrons transferred, four hydrogen ions are translocated across the cytoplasmic membrane), and thus conserves the redox energy in a proton gradient. The polypeptide is NADH-quinone oxidoreductase subunit K (Cupriavidus pinatubonensis (strain JMP 134 / LMG 1197) (Cupriavidus necator (strain JMP 134))).